Here is a 324-residue protein sequence, read N- to C-terminus: Phospho-N-acetylmuramoyl-pentapeptide-transferase (324 aa).

10 consecutive transmembrane segments (helical) span residues 9–29, 54–74, 77–97, 117–137, 147–167, 176–196, 201–221, 227–247, 253–273, and 304–324; these read TFAV…PFLV, MGAV…SFIG, VSAA…LGFL, FLGQ…SDFA, IEVD…VGFS, LDGL…VIAF, MDVA…LLFN, IFMG…VSIL, LLLL…LQVF, and VLTF…VVIF.

Belongs to the glycosyltransferase 4 family. MraY subfamily. Mg(2+) serves as cofactor.

It is found in the cell membrane. It catalyses the reaction UDP-N-acetyl-alpha-D-muramoyl-L-alanyl-gamma-D-glutamyl-meso-2,6-diaminopimeloyl-D-alanyl-D-alanine + di-trans,octa-cis-undecaprenyl phosphate = di-trans,octa-cis-undecaprenyl diphospho-N-acetyl-alpha-D-muramoyl-L-alanyl-D-glutamyl-meso-2,6-diaminopimeloyl-D-alanyl-D-alanine + UMP. It participates in cell wall biogenesis; peptidoglycan biosynthesis. Catalyzes the initial step of the lipid cycle reactions in the biosynthesis of the cell wall peptidoglycan: transfers peptidoglycan precursor phospho-MurNAc-pentapeptide from UDP-MurNAc-pentapeptide onto the lipid carrier undecaprenyl phosphate, yielding undecaprenyl-pyrophosphoryl-MurNAc-pentapeptide, known as lipid I. The chain is Phospho-N-acetylmuramoyl-pentapeptide-transferase from Listeria welshimeri serovar 6b (strain ATCC 35897 / DSM 20650 / CCUG 15529 / CIP 8149 / NCTC 11857 / SLCC 5334 / V8).